The chain runs to 836 residues: Tuftelin-interacting protein 11 (836 aa).

Positions 1 to 13 are enriched in basic and acidic residues; sequence MSLSHLYRDGEGH. 3 disordered regions span residues 1–31, 54–73, and 85–136; these read MSLS…DWDL, WAER…RARD, and LKKG…AGGT. The required for interaction with DHX15 stretch occupies residues 1–50; it reads MSLSHLYRDGEGHMDDDEDERENFEITDWDLQNEFNPNRQRHWQTKEEAT. Phosphoserine is present on S2. Over residues 14-28 the composition is skewed to acidic residues; the sequence is MDDDEDERENFEITD. The segment covering 54 to 64 has biased composition (basic and acidic residues); the sequence is WAERDSDEERP. A phosphoserine mark is found at S59 and S98. Positions 91–102 are enriched in acidic residues; sequence EEAELEDSDDEE. The segment covering 103–116 has biased composition (basic and acidic residues); the sequence is KPVKQDEFPKDFGP. Phosphoserine is present on S144. In terms of domain architecture, G-patch spans 149-195; it reads TKGIGQKLLQKMGYVPGRGLGKNAQGIINPIEAKQRKGKGAVGAYGS. The disordered stretch occupies residues 183-236; sequence QRKGKGAVGAYGSERTTQSLQDFPVVDSEEEAEEEFQKELSQWRKDPSGSKKKP. S210 is modified (phosphoserine). Residues 217-231 are compositionally biased toward basic and acidic residues; it reads EFQKELSQWRKDPSG. Residues 699 to 704 carry the Nuclear localization signal motif; sequence VKDKFN. A required for nuclear speckle localization region spans residues 709–733; sequence IMNRAVSSNVGAYMQPGARENIAYL.

The protein belongs to the TFP11/STIP family. Identified in the spliceosome C complex. Found in the Intron Large (IL) complex, a post-mRNA release spliceosomal complex containing the excised intron, U2, U5 and U6 snRNPs, and splicing factors. Interacts with TUFT1. Interacts with DHX15; indicative for a recruitment of DHX15 to the IL complex. Interacts with GCFC2.

It is found in the cytoplasm. The protein resides in the nucleus. In terms of biological role, involved in pre-mRNA splicing, specifically in spliceosome disassembly during late-stage splicing events. Intron turnover seems to proceed through reactions in two lariat-intron associated complexes termed Intron Large (IL) and Intron Small (IS). In cooperation with DHX15 seems to mediate the transition of the U2, U5 and U6 snRNP-containing IL complex to the snRNP-free IS complex leading to efficient debranching and turnover of excised introns. May play a role in the differentiation of ameloblasts and odontoblasts or in the forming of the enamel extracellular matrix. This Sus scrofa (Pig) protein is Tuftelin-interacting protein 11 (TFIP11).